Consider the following 246-residue polypeptide: Mast cell protease 1 (246 aa).

An N-terminal signal peptide occupies residues 1 to 18; that stretch reads MQALLFLLALLWPPEAGA. The propeptide at 19–20 is activation peptide; that stretch reads EE. Residues 21-244 form the Peptidase S1 domain; the sequence is IIGGVESKPH…YVPWINLVIR (224 aa). Residues Cys-50 and Cys-66 are joined by a disulfide bond. Residues His-65 and Asp-109 each act as charge relay system in the active site. Cystine bridges form between Cys-143–Cys-208 and Cys-174–Cys-187. The active-site Charge relay system is the Ser-202.

This sequence belongs to the peptidase S1 family. Granzyme subfamily.

The chain is Mast cell protease 1 from Meriones unguiculatus (Mongolian jird).